The chain runs to 304 residues: 3-diazoavenalumate denitrifying reductase (304 aa).

Belongs to the NAD(P)-dependent epimerase/dehydratase family.

It catalyses the reaction 3-diazoavenalumate + NADPH + H(+) = avenalumate + N2 + NADP(+). The catalysed reaction is 3-diazoavenalumate + NADH + H(+) = avenalumate + N2 + NAD(+). The enzyme catalyses (E)-3-diazocoumarate + NADPH = N2 + (E)-4-coumarate + NADP(+). It carries out the reaction (E)-3-diazocoumarate + NADH = N2 + (E)-4-coumarate + NAD(+). In terms of biological role, oxidoreductase involved in the biosynthesis of avenalumic acid (AVA). Catalyzes the denitrification of 3-diazoavenalumic acid (3-DAA) to produce AVA. It can also act on 3-diazocoumaric acid (3-DCA). Can use NADPH or NADH as a reductant, with a preference for NADPH. The sequence is that of 3-diazoavenalumate denitrifying reductase from Streptomyces sp.